The chain runs to 612 residues: Elongation factor 4 (612 aa).

The tr-type G domain occupies 12-194 (SRIRNFSIIA…QIVEKVPAPA (183 aa)). GTP is bound by residues 24–29 (DHGKST) and 141–144 (NKID).

Belongs to the TRAFAC class translation factor GTPase superfamily. Classic translation factor GTPase family. LepA subfamily.

It is found in the cell membrane. The enzyme catalyses GTP + H2O = GDP + phosphate + H(+). In terms of biological role, required for accurate and efficient protein synthesis under certain stress conditions. May act as a fidelity factor of the translation reaction, by catalyzing a one-codon backward translocation of tRNAs on improperly translocated ribosomes. Back-translocation proceeds from a post-translocation (POST) complex to a pre-translocation (PRE) complex, thus giving elongation factor G a second chance to translocate the tRNAs correctly. Binds to ribosomes in a GTP-dependent manner. The sequence is that of Elongation factor 4 from Bacillus pumilus (strain SAFR-032).